Consider the following 690-residue polypeptide: Guanylate cyclase soluble subunit alpha-1 (690 aa).

S267 carries the phosphoserine modification. The Guanylate cyclase domain maps to T481–E608.

It belongs to the adenylyl cyclase class-4/guanylyl cyclase family. The active enzyme is formed by a heterodimer of an alpha and a beta subunit. Heterodimer with GUCY1B1. It depends on Mg(2+) as a cofactor. The cofactor is Mn(2+).

It is found in the cytoplasm. It carries out the reaction GTP = 3',5'-cyclic GMP + diphosphate. With respect to regulation, activated by nitric oxide in the presence of magnesium or manganese ions. The protein is Guanylate cyclase soluble subunit alpha-1 (GUCY1A1) of Canis lupus familiaris (Dog).